Here is a 310-residue protein sequence, read N- to C-terminus: Homoserine kinase (310 aa).

An ATP-binding site is contributed by P91–C101.

Belongs to the GHMP kinase family. Homoserine kinase subfamily.

The protein localises to the cytoplasm. It catalyses the reaction L-homoserine + ATP = O-phospho-L-homoserine + ADP + H(+). It functions in the pathway amino-acid biosynthesis; L-threonine biosynthesis; L-threonine from L-aspartate: step 4/5. Catalyzes the ATP-dependent phosphorylation of L-homoserine to L-homoserine phosphate. The sequence is that of Homoserine kinase from Sodalis glossinidius (strain morsitans).